The following is a 777-amino-acid chain: MKRLTFGACICCLLSLMACSQKAKQVQIPEYDKGINIIPLPMQLTESDDSFEVDDKTTICVSAEELKPIAKLLADKLRASADLSLQIEIGEEPSGNAIYIGVDTALPLKEEGYMLRSDKRGVSIIGKSAHGAFYGMQTLLQLLPAEVESSNEVLLPMTVPGVEIKDEPAFGYRGFMLDVCRHFLSVEDIKKHIDIMAMFKINRFHWHLTEDQAWRIEIKKYPRLTEVGSTRTEGDGTQYSGFYTQEQVRDIVQYASDRFITVIPEIEMPGHAMAALAAYPQLACFPREFKPRIIWGVEQDVYCAGKDSVFRFISDVIDEVAPLFPGTYFHIGGDECPKDRWKACSLCQKRMRDNGLKDEHELQSYFIKQAEKVLQKHGKRLIGWDEILEGGLAPSATVMSWRGEDGGIAAANMNHDVIMTPGSGGLYLDHYQGDPTVEPVAIGGYAPLEQVYAYNPLPKELPADKHRYVLGAQANLWAEYLYTSERYDYQAYPRLLAVAELTWTPLAKKDFADFCRRLDNACVRLDMHGINYHIPLPEQPGGSSDFIAFTDKAKLTFTTSRPMKMVYTLDETEPTLTSTPYTVPLEFAQTGLLKIRTVTAGGKMSPVRRIRVEKQPFNMSMEVPAPKPGLTIRTAYGDLYDVPDLQQVASWEVGTVSSLEEIMHGKEKITSPEVLERRVVEATGYVLIPEDGVYEFSTENNEFWIDNVKLIDNVGEVKKFSRRNSSRALQKGYHPIKTIWVGAIQGGWPTYWNYSRVMIRLKGEEKFKPISSDMLFQ.

Residues methionine 1–alanine 18 form the signal peptide. The N-palmitoyl cysteine moiety is linked to residue cysteine 19. Cysteine 19 is lipidated: S-diacylglycerol cysteine. The PA14 domain occupies alanine 625 to lysine 766.

The protein belongs to the glycosyl hydrolase 20 family.

It localises to the cell outer membrane. The enzyme catalyses Hydrolysis of terminal non-reducing N-acetyl-D-hexosamine residues in N-acetyl-beta-D-hexosaminides.. This is Beta-hexosaminidase (nahA) from Porphyromonas gingivalis (strain ATCC BAA-308 / W83).